The sequence spans 118 residues: Vacuolar ATPase assembly integral membrane protein vma-21 (118 aa).

Over 1–35 the chain is Cytoplasmic; it reads MATRRIISQEKTLLEKDDRIGSSPAASEKSNITPA. A helical membrane pass occupies residues 36 to 56; sequence VPASVIIKLLAFTFAMIVIPI. The Lumenal segment spans residues 57 to 73; that stretch reads SSYFLTVDRLFKGNSTY. A helical membrane pass occupies residues 74–94; the sequence is AGATAAIMANVVLIGYIIVAM. The Cytoplasmic portion of the chain corresponds to 95–118; it reads AEDQSDQENEKKGGGGKGEGKKDL. Residues 98 to 118 form a disordered region; the sequence is QSDQENEKKGGGGKGEGKKDL. Positions 102–118 are enriched in basic and acidic residues; that stretch reads ENEKKGGGGKGEGKKDL. The short motif at 115–118 is the Prevents secretion from ER element; the sequence is KKDL.

Belongs to the VMA21 family.

It is found in the endoplasmic reticulum membrane. Its subcellular location is the endoplasmic reticulum-Golgi intermediate compartment membrane. The protein localises to the cytoplasmic vesicle. The protein resides in the COPII-coated vesicle membrane. Its function is as follows. Required for the assembly of the V0 complex of the vacuolar ATPase (V-ATPase) in the endoplasmic reticulum. The polypeptide is Vacuolar ATPase assembly integral membrane protein vma-21 (vma-21) (Neurospora crassa (strain ATCC 24698 / 74-OR23-1A / CBS 708.71 / DSM 1257 / FGSC 987)).